A 448-amino-acid chain; its full sequence is Nicotinate phosphoribosyltransferase pncB1 (448 aa).

Residues 1–21 (MGPPPAARRREGEPDNQDPAG) form a disordered region. His212 is subject to Phosphohistidine. The interval 353 to 372 (RSSYKESPGGRKEALRRSRA) is disordered.

This sequence belongs to the NAPRTase family. Transiently phosphorylated on a His residue during the reaction cycle. Phosphorylation strongly increases the affinity for substrates and increases the rate of nicotinate D-ribonucleotide production. Dephosphorylation regenerates the low-affinity form of the enzyme, leading to product release.

The enzyme catalyses nicotinate + 5-phospho-alpha-D-ribose 1-diphosphate + ATP + H2O = nicotinate beta-D-ribonucleotide + ADP + phosphate + diphosphate. It functions in the pathway cofactor biosynthesis; NAD(+) biosynthesis; nicotinate D-ribonucleotide from nicotinate: step 1/1. In terms of biological role, involved in the Preiss-Handler pathway, which is a recycling route that permits the salvage of free nicotinamide (NM) and nicotinic acid (Na) involved in the NAD biosynthesis. Catalyzes the synthesis of beta-nicotinate D-ribonucleotide from nicotinate and 5-phospho-D-ribose 1-phosphate at the expense of ATP. It is not able to use nicotinamide. PncB1 contributes to basal NAD level. In Mycobacterium tuberculosis (strain ATCC 25618 / H37Rv), this protein is Nicotinate phosphoribosyltransferase pncB1 (pncB1).